The primary structure comprises 782 residues: LPS-assembly protein LptD (782 aa).

The first 24 residues, 1–24 (MKKNSYTRLSIAILSTLYSVSSLA), serve as a signal peptide directing secretion.

It belongs to the LptD family. In terms of assembly, component of the lipopolysaccharide transport and assembly complex. Interacts with LptE and LptA.

The protein localises to the cell outer membrane. In terms of biological role, together with LptE, is involved in the assembly of lipopolysaccharide (LPS) at the surface of the outer membrane. This chain is LPS-assembly protein LptD, found in Pasteurella multocida (strain Pm70).